Here is a 368-residue protein sequence, read N- to C-terminus: 1-aminocyclopropane-1-carboxylate synthase (368 aa).

Residue Lys230 is modified to N6-(pyridoxal phosphate)lysine.

It belongs to the class-I pyridoxal-phosphate-dependent aminotransferase family. Homodimer. It depends on pyridoxal 5'-phosphate as a cofactor.

The enzyme catalyses S-adenosyl-L-methionine = 1-aminocyclopropane-1-carboxylate + S-methyl-5'-thioadenosine + H(+). The protein operates within alkene biosynthesis; ethylene biosynthesis via S-adenosyl-L-methionine; ethylene from S-adenosyl-L-methionine: step 1/2. Functionally, catalyzes the formation of 1-aminocyclopropane-1-carboxylate, a direct precursor of ethylene in higher plants. The chain is 1-aminocyclopropane-1-carboxylate synthase (ACS5) from Vigna radiata var. radiata (Mung bean).